Reading from the N-terminus, the 177-residue chain is Large ribosomal subunit protein uL6 (177 aa).

The protein belongs to the universal ribosomal protein uL6 family. In terms of assembly, part of the 50S ribosomal subunit.

In terms of biological role, this protein binds to the 23S rRNA, and is important in its secondary structure. It is located near the subunit interface in the base of the L7/L12 stalk, and near the tRNA binding site of the peptidyltransferase center. The polypeptide is Large ribosomal subunit protein uL6 (Enterobacter sp. (strain 638)).